The following is a 261-amino-acid chain: Uridine-cytidine kinase 2 (261 aa).

The span at 1–16 shows a compositional bias: polar residues; the sequence is MAGDSEQTLQNHQQPN. Residues 1 to 24 form a disordered region; that stretch reads MAGDSEQTLQNHQQPNGGEPFLIG. Ala2 bears the N-acetylalanine mark. 27 to 35 serves as a coordination point for ATP; the sequence is GGTASGKSS. Substrate is bound by residues Asp84, Tyr112, His117, Arg166, Arg176, and Gln184. Asp213 lines the ATP pocket. The segment at 240–261 is disordered; sequence GYLNGYTPSRKRQASESSSRPH. Ser254 is modified (phosphoserine).

This sequence belongs to the uridine kinase family. Homotetramer.

The enzyme catalyses uridine + ATP = UMP + ADP + H(+). It catalyses the reaction cytidine + ATP = CMP + ADP + H(+). It participates in pyrimidine metabolism; CTP biosynthesis via salvage pathway; CTP from cytidine: step 1/3. Its pathway is pyrimidine metabolism; UMP biosynthesis via salvage pathway; UMP from uridine: step 1/1. Phosphorylates uridine and cytidine to uridine monophosphate and cytidine monophosphate. Does not phosphorylate deoxyribonucleosides or purine ribonucleosides. Can use ATP or GTP as a phosphate donor. The protein is Uridine-cytidine kinase 2 (Uck2) of Mus musculus (Mouse).